Here is a 626-residue protein sequence, read N- to C-terminus: ATP-dependent zinc metalloprotease FtsH 3 (626 aa).

Residues 1 to 7 (MNKLFRS) lie on the Cytoplasmic side of the membrane. The helical transmembrane segment at 8–28 (LAFYMLILVISVAIAVQLGGT) threads the bilayer. At 29–103 (SQQTTQLVYS…LDFRQDNTSG (75 aa)) the chain is on the extracellular side. The helical transmembrane segment at 104-124 (IWAMLLQTLVPVVLVLLAFFF) threads the bilayer. The Cytoplasmic segment spans residues 125–626 (IMQQTQGSGN…GGTSQVAPAF (502 aa)). 197-204 (GPPGTGKT) serves as a coordination point for ATP. A Zn(2+)-binding site is contributed by His-420. Glu-421 is a catalytic residue. The Zn(2+) site is built by His-424 and Asp-496. The segment at 602 to 626 (PPRPKPEPLKPRMVGGGTSQVAPAF) is disordered.

It in the central section; belongs to the AAA ATPase family. This sequence in the C-terminal section; belongs to the peptidase M41 family. Homohexamer. Requires Zn(2+) as cofactor.

It localises to the cell membrane. In terms of biological role, acts as a processive, ATP-dependent zinc metallopeptidase for both cytoplasmic and membrane proteins. Plays a role in the quality control of integral membrane proteins. The polypeptide is ATP-dependent zinc metalloprotease FtsH 3 (Symbiobacterium thermophilum (strain DSM 24528 / JCM 14929 / IAM 14863 / T)).